Reading from the N-terminus, the 559-residue chain is DNA ligase (559 aa).

Residue Glu-247 coordinates ATP. The N6-AMP-lysine intermediate role is filled by Lys-249. 6 residues coordinate ATP: Arg-254, Arg-269, Glu-299, Phe-339, Arg-414, and Lys-420.

The protein belongs to the ATP-dependent DNA ligase family. Mg(2+) serves as cofactor.

It carries out the reaction ATP + (deoxyribonucleotide)n-3'-hydroxyl + 5'-phospho-(deoxyribonucleotide)m = (deoxyribonucleotide)n+m + AMP + diphosphate.. Functionally, DNA ligase that seals nicks in double-stranded DNA during DNA replication, DNA recombination and DNA repair. The chain is DNA ligase from Pyrococcus abyssi.